Reading from the N-terminus, the 153-residue chain is Large ribosomal subunit protein uL22 (153 aa).

Belongs to the universal ribosomal protein uL22 family. As to quaternary structure, part of the 50S ribosomal subunit.

Functionally, this protein binds specifically to 23S rRNA. It makes multiple contacts with different domains of the 23S rRNA in the assembled 50S subunit and ribosome. Its function is as follows. The globular domain of the protein is located near the polypeptide exit tunnel on the outside of the subunit, while an extended beta-hairpin is found that lines the wall of the exit tunnel in the center of the 70S ribosome. The protein is Large ribosomal subunit protein uL22 of Methanococcus maripaludis (strain DSM 14266 / JCM 13030 / NBRC 101832 / S2 / LL).